Here is an 887-residue protein sequence, read N- to C-terminus: Phosphatidylinositol 3-kinase catalytic subunit type 3 (887 aa).

Residues Tyr-35–Gln-184 form the C2 PI3K-type domain. Residues Val-149–Asp-170 are disordered. Polar residues predominate over residues Pro-156–Asp-170. Thr-163 carries the phosphothreonine; by AMPK modification. Ser-165 carries the phosphoserine; by AMPK modification. Ser-244, Ser-261, and Ser-282 each carry phosphoserine. Positions Asp-283–Val-520 constitute a PIK helical domain. The interval Glu-416–Asp-467 is disordered. Low complexity predominate over residues Gln-423–Gln-444. Residues Pro-449–Ala-459 show a composition bias toward pro residues. The PI3K/PI4K catalytic domain maps to Ile-605 to Phe-871. The segment at Leu-611–Met-617 is G-loop. Positions Gly-740–Asn-748 are catalytic loop. Residues His-759–Asn-780 are activation loop.

This sequence belongs to the PI3/PI4-kinase family. Component of the PI3K (PI3KC3/PI3K-III/class III phosphatidylinositol 3-kinase) complex the core of which is composed of the catalytic subunit PIK3C3, the regulatory subunit PIK3R4 and BECN1 associating with additional regulatory/auxiliary subunits to form alternative complex forms. Alternative complex forms containing a fourth regulatory subunit in a mutually exclusive manner are: the PI3K complex I (PI3KC3-C1) containing ATG14, and the PI3K complex II (PI3KC3-C2) containing UVRAG. PI3KC3-C1 displays a V-shaped architecture with PIK3R4 serving as a bridge between PIK3C3 and the ATG14:BECN1 subcomplex. Both, PI3KC3-C1 and PI3KC3-C2, can associate with further regulatory subunits such as RUBCN, SH3GLB1/Bif-1 and AMBRA1. PI3KC3-C1 probably associates with PIK3CB. Interacts with RAB7A in the presence of PIK3R4. Interacts with AMBRA1. Interacts with BECN1P1/BECN2. Interacts with SLAMF1. May interact with DYN2. May be a component of a complex composed of RAB5A (in GDP-bound form), DYN2 and PIK3C3. Interacts with NCKAP1L. Interacts with ATG14; this interaction is increased in the absence of TMEM39A. Interacts with STEEP1; the interaction is STING1-dependent and required for trafficking of STING1 from the endoplasmic reticulum. Interacts with YWHAG. Interacts with ARMC3. Mn(2+) serves as cofactor. Ubiquitinated via 'Lys-29'- and 'Lys-48'-linked ubiquitination by UBE3C, promoting its degradation. Deubiquitination by ZRANB1/TRABID promotes its stabilization, leading to autophagosome maturation.

Its subcellular location is the midbody. It is found in the late endosome. It localises to the cytoplasmic vesicle. The protein localises to the autophagosome. It catalyses the reaction a 1,2-diacyl-sn-glycero-3-phospho-(1D-myo-inositol) + ATP = a 1,2-diacyl-sn-glycero-3-phospho-(1D-myo-inositol-3-phosphate) + ADP + H(+). Its function is as follows. Catalytic subunit of the PI3K complex that mediates formation of phosphatidylinositol 3-phosphate; different complex forms are believed to play a role in multiple membrane trafficking pathways: PI3KC3-C1 is involved in initiation of autophagosomes and PI3KC3-C2 in maturation of autophagosomes and endocytosis. As part of PI3KC3-C1, promotes endoplasmic reticulum membrane curvature formation prior to vesicle budding. Involved in regulation of degradative endocytic trafficking and required for the abscission step in cytokinesis, probably in the context of PI3KC3-C2. Involved in the transport of lysosomal enzyme precursors to lysosomes. Required for transport from early to late endosomes. The polypeptide is Phosphatidylinositol 3-kinase catalytic subunit type 3 (Rattus norvegicus (Rat)).